The sequence spans 327 residues: Tyrosine--tRNA ligase (327 aa).

Residue tyrosine 33 participates in L-tyrosine binding. The 'HIGH' region motif lies at 38–46 (PSGVLHLGH). L-tyrosine contacts are provided by tyrosine 154, glutamine 158, aspartate 161, and glutamine 176. The short motif at 212–216 (KMSSS) is the 'KMSKS' region element. Residue serine 215 coordinates ATP.

The protein belongs to the class-I aminoacyl-tRNA synthetase family. TyrS type 3 subfamily. As to quaternary structure, homodimer.

The protein localises to the cytoplasm. It carries out the reaction tRNA(Tyr) + L-tyrosine + ATP = L-tyrosyl-tRNA(Tyr) + AMP + diphosphate + H(+). In terms of biological role, catalyzes the attachment of tyrosine to tRNA(Tyr) in a two-step reaction: tyrosine is first activated by ATP to form Tyr-AMP and then transferred to the acceptor end of tRNA(Tyr). This Halobacterium salinarum (strain ATCC 29341 / DSM 671 / R1) protein is Tyrosine--tRNA ligase.